Here is a 548-residue protein sequence, read N- to C-terminus: Chaperonin GroEL (548 aa).

Residues 30-33 (TLGP), K51, 87-91 (DGTTT), G415, 478-480 (NAA), and D494 contribute to the ATP site.

This sequence belongs to the chaperonin (HSP60) family. Forms a cylinder of 14 subunits composed of two heptameric rings stacked back-to-back. Interacts with the co-chaperonin GroES.

The protein localises to the cytoplasm. It carries out the reaction ATP + H2O + a folded polypeptide = ADP + phosphate + an unfolded polypeptide.. In terms of biological role, together with its co-chaperonin GroES, plays an essential role in assisting protein folding. The GroEL-GroES system forms a nano-cage that allows encapsulation of the non-native substrate proteins and provides a physical environment optimized to promote and accelerate protein folding. The sequence is that of Chaperonin GroEL from Trichlorobacter lovleyi (strain ATCC BAA-1151 / DSM 17278 / SZ) (Geobacter lovleyi).